The sequence spans 992 residues: GATOR2 complex protein WDR59 (992 aa).

WD repeat units follow at residues 57-98, 103-143, 146-185, 189-229, 232-276, 278-318, and 319-362; these read QSKW…GEVG, GHTR…KPTV, SAVA…TAVE, AHLS…KYLN, PCQV…APVH, FVGH…RVDY, and QMQR…SLSH. Residues 343-373 are disordered; sequence PEPEKTPHPQDIDHQPSLSHGEEDAIKEDPP. Positions 344 to 373 are enriched in basic and acidic residues; that stretch reads EPEKTPHPQDIDHQPSLSHGEEDAIKEDPP. Residues 393–494 enclose the RWD domain; it reads QEFSLINVQI…RQLVSCLESF (102 aa). Serine 564 carries the phosphoserine modification. Residues 660–706 form a WD 8 repeat; the sequence is KSLGELYILNVNDTQETCQKNATSAMLVGRKDLVQVWSLATVATDLC. Phosphoserine is present on residues serine 839, serine 840, and serine 848. The tract at residues 849–870 is disordered; the sequence is LTYSDPRERERDQHDKNKRLLD. Basic and acidic residues predominate over residues 853-869; that stretch reads DPRERERDQHDKNKRLL. Residues 919-939 form a C4-type zinc finger; the sequence is YCSHCRSEVRGTQCAICKGFT. Positions 920, 923, 932, 935, 945, 956, 961, 964, 967, 978, 982, 984, and 986 each coordinate Zn(2+). The RING-type; atypical zinc finger occupies 940 to 989; sequence FQCAICHVAVRGSSNFCLTCGHGGHTSHMMEWFRTQEVCPTGCGCHCLLE.

The protein belongs to the WD repeat WDR59 family. Component of the GATOR2 subcomplex, composed of MIOS, SEC13, SEH1L, WDR24 and WDR59. The GATOR2 complex interacts with CASTOR1 and CASTOR2; the interaction is negatively regulated by arginine. The GATOR2 complex interacts with SESN1, SESN2 and SESN3; the interaction is negatively regulated by amino acids. Interacts with DDB1-CUL4A/B E3 ligase complexes.

It localises to the lysosome membrane. With respect to regulation, the GATOR2 complex is negatively regulated by the upstream amino acid sensors CASTOR1 and SESN2, which sequester the GATOR2 complex in absence of amino acids. In the presence of abundant amino acids, GATOR2 is released from CASTOR1 and SESN2 and activated. In terms of biological role, as a component of the GATOR2 complex, functions as an activator of the amino acid-sensing branch of the mTORC1 signaling pathway. The GATOR2 complex indirectly activates mTORC1 through the inhibition of the GATOR1 subcomplex. GATOR2 probably acts as an E3 ubiquitin-protein ligase toward GATOR1. In the presence of abundant amino acids, the GATOR2 complex mediates ubiquitination of the NPRL2 core component of the GATOR1 complex, leading to GATOR1 inactivation. In the absence of amino acids, GATOR2 is inhibited, activating the GATOR1 complex. The chain is GATOR2 complex protein WDR59 from Mus musculus (Mouse).